Consider the following 55-residue polypeptide: Large ribosomal subunit protein bL33 (55 aa).

The protein belongs to the bacterial ribosomal protein bL33 family.

This is Large ribosomal subunit protein bL33 from Zymomonas mobilis subsp. mobilis (strain ATCC 31821 / ZM4 / CP4).